The sequence spans 220 residues: Large ribosomal subunit protein bL21 (220 aa).

Positions 109–158 (SKKVAAKPATSEEKAAEEKPAKAKKEAAEKGASPRETKAAPLFSAPEGEP) are disordered. The span at 118–146 (TSEEKAAEEKPAKAKKEAAEKGASPRETK) shows a compositional bias: basic and acidic residues.

It belongs to the bacterial ribosomal protein bL21 family. In terms of assembly, part of the 50S ribosomal subunit. Contacts protein L20.

In terms of biological role, this protein binds to 23S rRNA in the presence of protein L20. The polypeptide is Large ribosomal subunit protein bL21 (Chelativorans sp. (strain BNC1)).